The chain runs to 200 residues: Ubiquinol-cytochrome-c reductase complex assembly factor 1 (200 aa).

The protein belongs to the CBP3 family.

It is found in the mitochondrion inner membrane. Functionally, required for the assembly of the ubiquinol-cytochrome c reductase complex (mitochondrial respiratory chain complex III or cytochrome b-c1 complex). May be involved in cytochrome b translation and/or stability. This chain is Ubiquinol-cytochrome-c reductase complex assembly factor 1 (uqcc1), found in Xenopus laevis (African clawed frog).